The following is a 261-amino-acid chain: Phosphatidylglycerol--prolipoprotein diacylglyceryl transferase (261 aa).

A run of 7 helical transmembrane segments spans residues V19–Y39, L56–Y76, W92–F112, F126–G146, Q173–A193, F199–F219, and G227–I247. An a 1,2-diacyl-sn-glycero-3-phospho-(1'-sn-glycerol)-binding site is contributed by R139.

The protein belongs to the Lgt family.

It is found in the cell inner membrane. It carries out the reaction L-cysteinyl-[prolipoprotein] + a 1,2-diacyl-sn-glycero-3-phospho-(1'-sn-glycerol) = an S-1,2-diacyl-sn-glyceryl-L-cysteinyl-[prolipoprotein] + sn-glycerol 1-phosphate + H(+). It functions in the pathway protein modification; lipoprotein biosynthesis (diacylglyceryl transfer). In terms of biological role, catalyzes the transfer of the diacylglyceryl group from phosphatidylglycerol to the sulfhydryl group of the N-terminal cysteine of a prolipoprotein, the first step in the formation of mature lipoproteins. The protein is Phosphatidylglycerol--prolipoprotein diacylglyceryl transferase of Coxiella burnetii (strain Dugway 5J108-111).